We begin with the raw amino-acid sequence, 375 residues long: Trichodiene synthase (375 aa).

This sequence belongs to the trichodiene synthase family.

The enzyme catalyses (2E,6E)-farnesyl diphosphate = trichodiene + diphosphate. It functions in the pathway sesquiterpene biosynthesis; trichothecene biosynthesis. Its function is as follows. TS is a member of the terpene cyclase group of enzymes. It catalyzes the isomerization and cyclization of farnesyl pyro-phosphate to form trichodiene, the first cyclic intermediate in the biosynthetic pathway for trichothecenes. It serves to branch trichothecene biosynthesis from the isoprenoid pathway. This chain is Trichodiene synthase (TRI5), found in Fusarium austroamericanum.